Reading from the N-terminus, the 219-residue chain is UPF0073 inner membrane protein YqfA (219 aa).

At 1-23 the chain is on the cytoplasmic side; that stretch reads MVQKPLIKQGYSLAEEIANSVSH. The chain crosses the membrane as a helical span at residues 24–44; the sequence is GIGLVFGIVGLVLLLVQAVDL. Over 45 to 53 the chain is Periplasmic; that stretch reads NASATAITS. Residues 54 to 74 traverse the membrane as a helical segment; that stretch reads YSLYGGSMILLFLASTLYHAI. Topologically, residues 75 to 90 are cytoplasmic; the sequence is PHQRAKMWLKKFDHCA. Residues 91–111 form a helical membrane-spanning segment; the sequence is IYLLIAGTYTPFLLVGLDSPL. The Periplasmic segment spans residues 112-113; it reads AR. Residues 114–134 form a helical membrane-spanning segment; the sequence is GLMIVIWSLALLGILFKLTIA. Residues 135-138 lie on the Cytoplasmic side of the membrane; sequence HRFK. The helical transmembrane segment at 139-159 threads the bilayer; the sequence is ILSLVTYLAMGWLSLVVIYEM. The Periplasmic segment spans residues 160–165; the sequence is AVKLAA. The helical transmembrane segment at 166–186 threads the bilayer; the sequence is GSVTLLAVGGVVYSLGVIFYV. Residues 187 to 195 lie on the Cytoplasmic side of the membrane; it reads CKRIPYNHA. A helical transmembrane segment spans residues 196–216; the sequence is IWHGFVLGGSVCHFLAIYLYI. Topologically, residues 217–219 are periplasmic; it reads GQA.

Belongs to the UPF0073 (Hly-III) family.

Its subcellular location is the cell inner membrane. The protein is UPF0073 inner membrane protein YqfA (yqfA) of Escherichia coli O157:H7.